The chain runs to 357 residues: Probable cinnamyl alcohol dehydrogenase (357 aa).

Cysteine 47 contributes to the Zn(2+) binding site. Residue threonine 49 coordinates NADP(+). Residues histidine 69, glutamate 70, cysteine 100, cysteine 103, cysteine 106, cysteine 114, and cysteine 163 each coordinate Zn(2+). Residues threonine 167, 188 to 193 (GLGGVG), 211 to 216 (SSSDKK), threonine 251, glycine 275, and 298 to 300 (SFI) each bind NADP(+).

It belongs to the zinc-containing alcohol dehydrogenase family. As to quaternary structure, homodimer. Requires Zn(2+) as cofactor.

The enzyme catalyses (E)-cinnamyl alcohol + NADP(+) = (E)-cinnamaldehyde + NADPH + H(+). The catalysed reaction is (E)-coniferol + NADP(+) = (E)-coniferaldehyde + NADPH + H(+). It catalyses the reaction (E)-sinapyl alcohol + NADP(+) = (E)-sinapaldehyde + NADPH + H(+). It carries out the reaction (E)-4-coumaroyl alcohol + NADP(+) = (E)-4-coumaraldehyde + NADPH + H(+). The enzyme catalyses (E)-caffeyl alcohol + NADP(+) = (E)-caffeyl aldehyde + NADPH + H(+). The protein operates within aromatic compound metabolism; phenylpropanoid biosynthesis. Functionally, involved in lignin biosynthesis. Catalyzes the final step specific for the production of lignin monomers. Catalyzes the NADPH-dependent reduction of coniferaldehyde, 5-hydroxyconiferaldehyde, sinapaldehyde, 4-coumaraldehyde and caffeyl aldehyde to their respective alcohols. The protein is Probable cinnamyl alcohol dehydrogenase of Populus deltoides (Eastern poplar).